The following is a 231-amino-acid chain: Ribonuclease HII (231 aa).

One can recognise an RNase H type-2 domain in the interval 32 to 223 (WPVAGMDEAG…FRLGGTEVVE (192 aa)). A divalent metal cation is bound by residues aspartate 38, glutamate 39, and aspartate 130.

It belongs to the RNase HII family. Requires Mn(2+) as cofactor. Mg(2+) serves as cofactor.

The protein localises to the cytoplasm. It carries out the reaction Endonucleolytic cleavage to 5'-phosphomonoester.. Its function is as follows. Endonuclease that specifically degrades the RNA of RNA-DNA hybrids. The protein is Ribonuclease HII of Mesorhizobium japonicum (strain LMG 29417 / CECT 9101 / MAFF 303099) (Mesorhizobium loti (strain MAFF 303099)).